Consider the following 188-residue polypeptide: Photosystem I assembly protein Ycf4 (188 aa).

Helical transmembrane passes span 26–48 (MLWASVSAIGGIGFLLAGLSSYF) and 68–90 (AALTFYGVAGTLLSAYLWFVFFL).

It belongs to the Ycf4 family.

The protein resides in the cellular thylakoid membrane. Seems to be required for the assembly of the photosystem I complex. This chain is Photosystem I assembly protein Ycf4, found in Picosynechococcus sp. (strain ATCC 27264 / PCC 7002 / PR-6) (Agmenellum quadruplicatum).